The following is a 117-amino-acid chain: Protein Wnt-6 (117 aa).

The O-palmitoleoyl serine; by PORCN moiety is linked to residue S1. A disulfide bond links C83 and C98. An N-linked (GlcNAc...) asparagine glycan is attached at N84.

Belongs to the Wnt family. Post-translationally, palmitoleoylation is required for efficient binding to frizzled receptors. Depalmitoleoylation leads to Wnt signaling pathway inhibition.

It localises to the secreted. The protein localises to the extracellular space. The protein resides in the extracellular matrix. Ligand for members of the frizzled family of seven transmembrane receptors. Probable developmental protein. May be a signaling molecule which affects the development of discrete regions of tissues. Is likely to signal over only few cell diameters. In Plethodon jordani (Red-cheeked salamander), this protein is Protein Wnt-6 (WNT-6).